An 80-amino-acid polypeptide reads, in one-letter code: Cell division activator CedA (80 aa).

Belongs to the CedA family.

Its function is as follows. Activates the cell division inhibited by chromosomal DNA over-replication. This is Cell division activator CedA from Escherichia coli (strain SMS-3-5 / SECEC).